The following is a 156-amino-acid chain: Ribonuclease pancreatic (156 aa).

An N-terminal signal peptide occupies residues 1–28 (MALEKSLVRLLLLVLILLVLGWVQPSLG). Basic and acidic residues predominate over residues 33-43 (AKKFQRQHMDS). Positions 33 to 53 (AKKFQRQHMDSDSSPSSSSTY) are disordered. Substrate-binding residues include K35 and R38. Residue H40 is the Proton acceptor of the active site. 4 cysteine pairs are disulfide-bonded: C54-C112, C68-C123, C86-C138, and C93-C100. N-linked (GlcNAc...) asparagine; partial glycosylation is present at N62. Residues 69-73 (KPVNT) and K94 each bind substrate. N104 is a glycosylation site (N-linked (GlcNAc...) asparagine). Residue R113 coordinates substrate. An N-linked (GlcNAc...) asparagine glycan is attached at N116. H147 serves as the catalytic Proton donor.

Belongs to the pancreatic ribonuclease family. As to quaternary structure, monomer. Interacts with and forms tight 1:1 complexes with RNH1. Dimerization of two such complexes may occur. Interaction with RNH1 inhibits this protein. In terms of processing, N-linked glycans are of complex type. Pancreas and other tissues and body fluids (indicating it may have other physiological functions besides its role in digestion).

Its subcellular location is the secreted. It catalyses the reaction an [RNA] containing cytidine + H2O = an [RNA]-3'-cytidine-3'-phosphate + a 5'-hydroxy-ribonucleotide-3'-[RNA].. The enzyme catalyses an [RNA] containing uridine + H2O = an [RNA]-3'-uridine-3'-phosphate + a 5'-hydroxy-ribonucleotide-3'-[RNA].. Endonuclease that catalyzes the cleavage of RNA on the 3' side of pyrimidine nucleotides. Acts on single-stranded and double-stranded RNA. The sequence is that of Ribonuclease pancreatic (RNASE1) from Homo sapiens (Human).